A 52-amino-acid chain; its full sequence is uncharacterized protein (52 aa).

A disordered region spans residues 1 to 52 (MSLRPCLTPSSMQYSDIYIPTPTPTHHTHTPTPHPHPHTHTHTHHNPNPTLF). The segment covering 35–45 (PHPHTHTHTHH) has biased composition (basic residues).

This is an uncharacterized protein from Saccharomyces cerevisiae (strain ATCC 204508 / S288c) (Baker's yeast).